The following is a 3392-amino-acid chain: Genome polyprotein (3392 aa).

Topologically, residues 1–101 (MNNQRKKTGR…LNIMNRRKRS (101 aa)) are cytoplasmic. The interval 33–74 (FSKGLLSGQGPMKLVMAFIAFLRFLAIPPTAGILARWSSFKK) is hydrophobic; homodimerization of capsid protein C. Positions 101–114 (SVTMLLMLLPTALA) are cleaved as a propeptide — ER anchor for the protein C, removed in mature form by serine protease NS3. The helical transmembrane segment at 102-119 (VTMLLMLLPTALAFHLTT) threads the bilayer. At 120-242 (RGGEPHMIVS…QIQKVETWAL (123 aa)) the chain is on the extracellular side. Asparagine 183 carries N-linked (GlcNAc...) asparagine; by host glycosylation. Residues 243–260 (RHPGFTVIALFLAHAIGT) form a helical membrane-spanning segment. Serine 261 is a topological domain (cytoplasmic). A helical membrane pass occupies residues 262 to 280 (ITQKGIIFILLMLVTPSMA). The Extracellular portion of the chain corresponds to 281–725 (MRCVGIGNRD…VHQVFGTAYG (445 aa)). 4 disulfides stabilise this stretch: cysteine 283–cysteine 310, cysteine 340–cysteine 401, cysteine 354–cysteine 385, and cysteine 372–cysteine 396. Asparagine 347 carries N-linked (GlcNAc...) asparagine; by host glycosylation. Asparagine 433 carries an N-linked (GlcNAc...) asparagine; by host glycan. Intrachain disulfides connect cysteine 465–cysteine 565 and cysteine 582–cysteine 613. The helical intramembrane region spans 726–746 (VLFSGVSWTMKIGIGILLTWL). Topologically, residues 747-752 (GLNSRS) are extracellular. An intramembrane region (helical) is located at residues 753–775 (TSLSMTCIAVGMVTLYLGVMVQA). The Extracellular portion of the chain corresponds to 776–1125 (DSGCVINWKG…KEENLVRSMV (350 aa)). 6 cysteine pairs are disulfide-bonded: cysteine 779–cysteine 790, cysteine 830–cysteine 918, cysteine 954–cysteine 998, cysteine 1055–cysteine 1104, cysteine 1066–cysteine 1088, and cysteine 1087–cysteine 1091. Residues asparagine 905 and asparagine 982 are each glycosylated (N-linked (GlcNAc...) asparagine; by host). The chain crosses the membrane as a helical span at residues 1126 to 1146 (SAGSGEVDSFSLGILCVSIMI). Residues 1147–1157 (EEVMRSRWSRK) are Cytoplasmic-facing. Residues 1158-1178 (MLMTGTLAVFLLLIMGQLTWN) form a helical membrane-spanning segment. The Lumenal segment spans residues 1179 to 1199 (DLIRLCIMVGANASDKMGMGT). Asparagine 1190 carries an N-linked (GlcNAc...) asparagine; by host glycan. Residues 1200-1220 (TYLALMATFKMRPMFAVGLLF) traverse the membrane as a helical segment. Over 1221–1289 (RRLTSREVLL…TFIKTTLSLD (69 aa)) the chain is Cytoplasmic. Residues 1290–1310 (YAWKTTAMVLSIVSLFPLCLS) form a helical membrane-spanning segment. At 1311 to 1315 (TTSQK) the chain is on the lumenal side. The chain crosses the membrane as a helical span at residues 1316–1336 (TTWLPVLLGSFGCKPLTMFLI). At 1337–1346 (TENEIWGRKS) the chain is on the cytoplasmic side. The helical transmembrane segment at 1347-1367 (WPLNEGIMAIGIVSILLSSLL) threads the bilayer. At 1368–1370 (KND) the chain is on the lumenal side. The chain crosses the membrane as a helical span at residues 1371 to 1391 (VPLAGPLIAGGMLIACYVISG). The Cytoplasmic segment spans residues 1392-1447 (SSADLSLEKAAEVSWEEEAEHSGTSHNILVEVQDDGTMKIKDEERDDTLTILLKAT). Residues 1398 to 1437 (LEKAAEVSWEEEAEHSGTSHNILVEVQDDGTMKIKDEERD) are interacts with and activates NS3 protease. Positions 1448–1468 (LLAVSGVYPMSIPATLFVWYF) form an intramembrane region, helical. Residues 1469–2148 (WQKKKQRSGV…MEELPDTIET (680 aa)) are Cytoplasmic-facing. One can recognise a Peptidase S7 domain in the interval 1476–1653 (SGVLWDTPSP…KASQEGPLPE (178 aa)). Catalysis depends on charge relay system; for serine protease NS3 activity residues histidine 1526, aspartate 1550, and serine 1610. Positions 1656-1812 (DEVFKKRNLT…QSNAVIQDEE (157 aa)) constitute a Helicase ATP-binding domain. 1669–1676 (LHPGSGKT) contacts ATP. Residues 1760–1763 (DEAH) carry the DEAH box motif. Positions 1822–1989 (SGYDWITDFP…IIPALFEPER (168 aa)) constitute a Helicase C-terminal domain. Lysine 1864 is subject to N6-acetyllysine; by host. The helical transmembrane segment at 2149–2169 (LMLLALIAVLTGGVTLFFLSG) threads the bilayer. Over 2170–2171 (KG) the chain is Lumenal. The helical intramembrane region spans 2172–2192 (LGKTSIGLLCVTASSALLWMA). Position 2193 (serine 2193) is a topological domain, lumenal. A helical transmembrane segment spans residues 2194–2214 (VEPHWIAASIILEFFLMVLLI). At 2215 to 2229 (PEPDRQRTPQDNQLA) the chain is on the cytoplasmic side. The helical transmembrane segment at 2230 to 2250 (YVVIGLLFMILTVAANEMGLL) threads the bilayer. At 2251 to 2276 (ETTKKDLGIGHVAAENHQHATILDVD) the chain is on the lumenal side. Positions 2277-2297 (LHPASAWTLYAVATTVITPMM) form an intramembrane region, helical. The Lumenal portion of the chain corresponds to 2298 to 2349 (RHTIENTTANISLTAIANQAAILMGLDKGWPISKMDLGVPLLALGCYSQVNP). N-linked (GlcNAc...) asparagine; by host glycosylation is found at asparagine 2303 and asparagine 2307. The helical transmembrane segment at 2350 to 2370 (LTLTAAVLMLVAHYAIIGPGL) threads the bilayer. The Cytoplasmic segment spans residues 2371–2415 (QAKATREAQKRTAAGIMKNPTVDGIVAIDLDPVVYDAKFEKQLGQ). Residues 2416-2436 (IMLLILCTSQILLMRTTWALC) form a helical membrane-spanning segment. Topologically, residues 2437-2461 (ESITLATGPLTTLWEGSPGKFWNTT) are lumenal. Asparagine 2459 carries N-linked (GlcNAc...) asparagine; by host glycosylation. A helical transmembrane segment spans residues 2462-2482 (IAVSMANIFRGSYLAGAGLAF). Residues 2483–3392 (SLMKSLGGGR…NESDPEGALW (910 aa)) lie on the Cytoplasmic side of the membrane. An mRNA cap 0-1 NS5-type MT domain is found at 2495-2756 (TGAQGETLGE…DVDLGAGTRH (262 aa)). Positions 2549, 2579, 2580, 2597, 2598, 2624, 2625, 2640, and 2711 each coordinate S-adenosyl-L-methionine. Positions 3021–3170 (NMYADDTAGW…PIDDRFATAL (150 aa)) constitute a RdRp catalytic domain.

It in the N-terminal section; belongs to the class I-like SAM-binding methyltransferase superfamily. mRNA cap 0-1 NS5-type methyltransferase family. As to quaternary structure, capsid protein C: Homodimer. Interacts (via N-terminus) with host EXOC1 (via C-terminus); this interaction results in EXOC1 degradation through the proteasome degradation pathway. Forms heterodimers with envelope protein E in the endoplasmic reticulum and Golgi. In terms of assembly, homodimer; in the endoplasmic reticulum and Golgi. Interacts with protein prM. Interacts with non-structural protein 1. As to quaternary structure, homodimer; Homohexamer when secreted. Interacts with envelope protein E. Interacts (via N-terminus) with serine protease NS3. In terms of assembly, forms a heterodimer with serine protease NS3. May form homooligomers. As to quaternary structure, forms a heterodimer with NS2B. Interacts with NS4B. Interacts with unphosphorylated RNA-directed RNA polymerase NS5; this interaction stimulates RNA-directed RNA polymerase NS5 guanylyltransferase activity. Interacts with host SHFL. Interacts with host MAVS; this interaction inhibits the synthesis of IFN-beta. Interacts with host SHFL. Interacts with host AUP1; the interaction occurs in the presence of Dengue virus NS4B and induces lipophagy which facilitates production of virus progeny particles. In terms of assembly, interacts with serine protease NS3. As to quaternary structure, homodimer. Interacts with host STAT2; this interaction inhibits the phosphorylation of the latter, and, when all viral proteins are present (polyprotein), targets STAT2 for degradation. Interacts with serine protease NS3. Specific enzymatic cleavages in vivo yield mature proteins. Cleavages in the lumen of endoplasmic reticulum are performed by host signal peptidase, wereas cleavages in the cytoplasmic side are performed by the Serine protease NS3. Signal cleavage at the 2K-4B site requires a prior NS3 protease-mediated cleavage at the 4A-2K site. In terms of processing, a C-terminally truncated form of non-structural protein 2A, results from partial cleavage by NS3. Post-translationally, cleaved in post-Golgi vesicles by a host furin, releasing the mature small envelope protein M, and peptide pr. This cleavage is incomplete as up to 30% of viral particles still carry uncleaved prM. The excreted form is glycosylated and this is required for efficient secretion of the protein from infected cells. In terms of processing, phosphorylated on serines residues. This phosphorylation may trigger NS5 nuclear localization. Post-translationally, N-glycosylated. Acetylated by host KAT5. Acetylation modulates NS3 RNA-binding and unwinding activities and plays an important positive role for viral replication.

Its subcellular location is the virion. The protein resides in the host nucleus. It is found in the secreted. The protein localises to the virion membrane. It localises to the host endoplasmic reticulum membrane. Its subcellular location is the host mitochondrion. The enzyme catalyses Selective hydrolysis of -Xaa-Xaa-|-Yaa- bonds in which each of the Xaa can be either Arg or Lys and Yaa can be either Ser or Ala.. The catalysed reaction is RNA(n) + a ribonucleoside 5'-triphosphate = RNA(n+1) + diphosphate. It carries out the reaction a ribonucleoside 5'-triphosphate + H2O = a ribonucleoside 5'-diphosphate + phosphate + H(+). It catalyses the reaction ATP + H2O = ADP + phosphate + H(+). The enzyme catalyses a 5'-end (5'-triphosphoguanosine)-ribonucleoside in mRNA + S-adenosyl-L-methionine = a 5'-end (N(7)-methyl 5'-triphosphoguanosine)-ribonucleoside in mRNA + S-adenosyl-L-homocysteine. The catalysed reaction is a 5'-end (N(7)-methyl 5'-triphosphoguanosine)-ribonucleoside in mRNA + S-adenosyl-L-methionine = a 5'-end (N(7)-methyl 5'-triphosphoguanosine)-(2'-O-methyl-ribonucleoside) in mRNA + S-adenosyl-L-homocysteine + H(+). Functionally, plays a role in virus budding by binding to membrane and gathering the viral RNA into a nucleocapsid that forms the core of a mature virus particle. During virus entry, may induce genome penetration in host cytoplasm after hemifusion induced by surface proteins. Can migrate tot cell nucleus where it modulates host functions. Prevents premature fusion activity of envelope proteins in trans Golgi by binding to envelope protein E at pH6.0. After virion release in extracellular space gets dissociated from E dimers. Its function is as follows. Acts as a chaperone for envelope protein E during intracellular virion assembly by masking and inactivating envelope protein E fusion peptide. prM is the only viral peptide matured by host furin in the trans-Golgi network. Presumably to avoid catastrophic activation of the viral fusion activity in acidic GolGi compartment prior to virion release. prM-E cleavage is ineficient, and many virions are only partially matured. These uncleaved prM would play a role in immune evasion. In terms of biological role, may play a role in virus budding. Exerts cytotoxic effects by activating a mitochondrial apoptotic pathway through M extodomain. May display a viroporin activity. Functionally, binds to host cell surface receptor and mediates fusion between viral and cellular membranes. Envelope protein is synthesized in the endoplasmic reticulum in the form of heterodimer with protein prM. They play a role in virion budding in the ER, and the newly formed immature particle is covered with 60 spikes composed of heterodimer between precursor prM and envelope protein E. The virion is transported to the Golgi apparatus where the low pH causes dissociation of PrM-E heterodimers and formation of E homodimers. prM-E cleavage is ineficient, and many virions are only partially matured. These uncleaved prM would play a role in immune evasion. Involved in immune evasion, pathogenesis and viral replication. Once cleaved off the polyprotein, is targeted to three destinations: the viral replication cycle, the plasma membrane and the extracellular compartment. May play a role in viral genome replication. Assist membrane bending and envelopment of genomic RNA at the endoplasmic reticulum. Excreted as a hexameric lipoparticle that plays a role against host immune response. Its function is as follows. Component of the viral RNA replication complex that functions in virion assembly and antagonizes the host immune response. In terms of biological role, required cofactor for the serine protease function of NS3. May have membrane-destabilizing activity and form viroporins. Functionally, displays three enzymatic activities: serine protease, NTPase and RNA helicase. NS3 serine protease, in association with NS2B, performs its autocleavage and cleaves the polyprotein at dibasic sites in the cytoplasm: C-prM, NS2A-NS2B, NS2B-NS3, NS3-NS4A, NS4A-2K and NS4B-NS5. NS3 RNA helicase binds RNA and unwinds dsRNA in the 3' to 5' direction. Regulates the ATPase activity of the NS3 helicase activity. NS4A allows NS3 helicase to conserve energy during unwinding. Plays a role in the inhibition of the host innate immune response. Interacts with host MAVS and thereby prevents the interaction between RIGI and MAVS. In turn, IFN-beta production is impaired. Interacts with host AUP1 which mediates induction of lipophagy in host cells and facilitates production of virus progeny particles. Its function is as follows. Functions as a signal peptide for NS4B and is required for the interferon antagonism activity of the latter. In terms of biological role, inhibits interferon (IFN)-induced host STAT1 phosphorylation and nuclear translocation, thereby preventing the establishment of cellular antiviral state by blocking the IFN-alpha/beta pathway. Functionally, replicates the viral (+) and (-) genome, and performs the capping of genomes in the cytoplasm. NS5 methylates viral RNA cap at guanine N-7 and ribose 2'-O positions. Besides its role in RNA genome replication, also prevents the establishment of cellular antiviral state by blocking the interferon-alpha/beta (IFN-alpha/beta) signaling pathway. Inhibits host TYK2 and STAT2 phosphorylation, thereby preventing activation of JAK-STAT signaling pathway. This chain is Genome polyprotein, found in Dengue virus type 1 (strain Brazil/97-11/1997) (DENV-1).